The sequence spans 458 residues: Phosphoglucosamine mutase (458 aa).

The active-site Phosphoserine intermediate is Ser-106. Residues Ser-106, Asp-247, Asp-249, and Asp-251 each coordinate Mg(2+). Ser-106 carries the post-translational modification Phosphoserine.

It belongs to the phosphohexose mutase family. The cofactor is Mg(2+). Activated by phosphorylation.

The catalysed reaction is alpha-D-glucosamine 1-phosphate = D-glucosamine 6-phosphate. Functionally, catalyzes the conversion of glucosamine-6-phosphate to glucosamine-1-phosphate. The polypeptide is Phosphoglucosamine mutase (Chlamydia abortus (strain DSM 27085 / S26/3) (Chlamydophila abortus)).